The chain runs to 340 residues: Alcohol dehydrogenase (340 aa).

Zn(2+) is bound by residues C40 and H63.

It belongs to the zinc-containing alcohol dehydrogenase family. Requires Zn(2+) as cofactor.

The catalysed reaction is a primary alcohol + NAD(+) = an aldehyde + NADH + H(+). It catalyses the reaction a secondary alcohol + NAD(+) = a ketone + NADH + H(+). This Rhizobium meliloti (strain 1021) (Ensifer meliloti) protein is Alcohol dehydrogenase (adhA).